A 33-amino-acid chain; its full sequence is Potassium channel toxin alpha-KTx 24.1 (33 aa).

4 cysteine pairs are disulfide-bonded: Cys-4/Cys-23, Cys-9/Cys-28, Cys-13/Cys-30, and Cys-18/Cys-33.

The protein belongs to the short scorpion toxin superfamily. Potassium channel inhibitor family. Alpha-KTx 24 subfamily. In terms of processing, contains 4 disulfide bonds. As to expression, expressed by the venom gland.

The protein resides in the secreted. Functionally, reversibly blocks voltage-gated potassium channels Kv1.2/KCNA2, Kv1.3/KCNA3 and, weakly, Shaker B. In Pandinus imperator (Emperor scorpion), this protein is Potassium channel toxin alpha-KTx 24.1.